We begin with the raw amino-acid sequence, 803 residues long: MSSKIRPSADDKKLQRVLYFFLERVRAAKDVSGQLLSPLIDNASVDTASVSPSSNGRPTTLKSIQSKIDEFQYHDFSEFVSDLAYLFINVKALYEGTQTYSFVQALEEFCIQQLRTFQQQGYIPVITWPNTDSPSATTSSPISRNPEYSVSPPNGSKFVKNEDEAYDSDLYVEEEDSDVKGRSMVGRDGRYKSEDLKRRKLQPSSKPLSSLEARAKVIMRQVRRYRDGSGRQLFAPFERLPDPRMFPEYYQAIEQPMALEVIQKKLSKHRYETIEQFVDDFNLMFDNAKSFNDPSSQVYRDADFLKNYLADVLRLEAGKLDSEFFNYETDSRASPQLPKNDIQPAVSIDGTLLNVGDWVLIRNPADSSKPIVSQIYRIWKSDDDINYVTVCWYLRPEQTVHRADAVFYENEVFKTSLYRDHPVSEIVGRCFVMYITRYIRGRPKGIRSTPVFVCESRYNDDTKQFSKIKSWKACMPQEVSGSEYEMILFDRPITLTKVASPLLHLLASKSQGLPSPATTDSNTHMLPSQGSLLPPSSISETKSFSTKASTPLSTDDIATPLSSAPNPPSVMPTYARKTSSHSERSSHSSYHNSSHVPTAAFNSPIMRTSTKSTSPIPARPFYAQSGSLQSLNTTQHSHQISGGHSGRMNVPYAKLSYTSHNGRHGGSNGNISGAKTPMTNYTINSMPSLPVFPPAFIVPGTHQKLDESSPVPGIDDVTVINTETAKMLDKDEHQNVLWYTVPPLDPIPLENRNGSLTHSVEYVLYKKSKGSQVITEKARSNELSREAKFENLVASLSDALIPP.

The Bromo 1 domain occupies A9–F117. Residues W128–N154 show a composition bias toward polar residues. A disordered region spans residues W128–K160. S168 is modified (phosphoserine). The interval E174–K206 is disordered. The segment covering D178–K197 has biased composition (basic and acidic residues). A Bromo 2 domain is found at K206–E316. Residues S331 and S334 each carry the phosphoserine modification. In terms of domain architecture, BAH spans T351–K469. The span at G512–M525 shows a compositional bias: polar residues. The interval G512–I616 is disordered. The span at L526–S539 shows a compositional bias: low complexity. Composition is skewed to polar residues over residues E540 to S553 and I605 to P615.

This sequence belongs to the RSC1 family. As to quaternary structure, component of the RSC complex composed of at least arp9, arp42, rsc1, rsc4, rsc7, rsc9, rsc58, sfh1, snf21, ssr1, ssr2, ssr3 and ssr4. The complex interacts with histone and histone variant components of centromeric chromatin.

Its subcellular location is the nucleus. Its function is as follows. Component of the chromatin structure remodeling complex (RSC), which is involved in transcription regulation and nucleosome positioning. Controls particularly membrane and organelle development genes. This chain is Chromatin structure-remodeling complex subunit rsc1 (rsc1), found in Schizosaccharomyces pombe (strain 972 / ATCC 24843) (Fission yeast).